The following is a 165-amino-acid chain: E3 ubiquitin ligase complex SCF subunit sconC (165 aa).

The tract at residues I106–R165 is interaction with the F-box domain of F-box proteins.

Belongs to the SKP1 family. Component of the SCF (SKP1-CUL1-F-box protein) E3 ubiquitin ligase complexes.

It functions in the pathway protein modification; protein ubiquitination. Functionally, essential component of the SCF (SKP1-CUL1-F-box protein) E3 ubiquitin ligase complexes, which mediate the ubiquitination and subsequent proteasomal degradation of target proteins. Controls sulfur metabolite repression, probably by mediating the inactivation or degradation of the metR transcription factor. The chain is E3 ubiquitin ligase complex SCF subunit sconC (sconC) from Arthroderma otae (Microsporum canis).